Consider the following 223-residue polypeptide: Small ribosomal subunit protein uS3 (223 aa).

A KH type-2 domain is found at 39–107 (VREFLKQKLK…PVQVSVEEIR (69 aa)).

Belongs to the universal ribosomal protein uS3 family. In terms of assembly, part of the 30S ribosomal subunit. Forms a tight complex with proteins S10 and S14.

Binds the lower part of the 30S subunit head. Binds mRNA in the 70S ribosome, positioning it for translation. In Methylococcus capsulatus (strain ATCC 33009 / NCIMB 11132 / Bath), this protein is Small ribosomal subunit protein uS3.